Consider the following 129-residue polypeptide: Large ribosomal subunit protein eL32 (129 aa).

Belongs to the eukaryotic ribosomal protein eL32 family.

This is Large ribosomal subunit protein eL32 (rpl32e) from Methanosarcina acetivorans (strain ATCC 35395 / DSM 2834 / JCM 12185 / C2A).